The following is a 2236-amino-acid chain: uncharacterized protein (2236 aa).

2 Spectrin repeats span residues glutamine 46–glutamate 146 and glutamine 238–glutamate 335. Coiled coils occupy residues valine 496–serine 541 and aspartate 603–glutamine 631. Spectrin repeat units lie at residues tyrosine 839–lysine 949, lysine 1048–glutamate 1146, leucine 1261–asparagine 1361, isoleucine 1367–alanine 1459, and glutamine 1562–glutamate 1667. The stretch at glutamine 1835 to aspartate 1869 forms a coiled coil. EF-hand domains lie at lysine 2104–asparagine 2139 and serine 2141–threonine 2176. 5 residues coordinate Ca(2+): aspartate 2154, serine 2156, threonine 2158, histidine 2160, and aspartate 2165.

It belongs to the spectrin family.

This is an uncharacterized protein from Caenorhabditis elegans.